Consider the following 549-residue polypeptide: Tight junction-associated protein 1 (549 aa).

Residues 1–34 (MSSAAPAKKPYRKAPPEHRELRLEIPVSRLEQEE) form a disordered region. The span at 14–23 (APPEHRELRL) shows a compositional bias: basic and acidic residues. Residues 42–171 (MKLLQQENEE…EELNERYRLD (130 aa)) adopt a coiled-coil conformation. Disordered stretches follow at residues 207 to 226 (RSGQEVASPSPSPSSSLSPG) and 266 to 322 (VDMS…PLYP). Serine 295 is subject to Phosphoserine. Positions 311-320 (YPTPSPPHPL) are enriched in pro residues. Threonine 313 carries the phosphothreonine modification. Serine 315 and serine 340 each carry phosphoserine. Disordered stretches follow at residues 359 to 404 (EDGS…SEED), 410 to 429 (QRAFVDRTPPPAAVVQRTAF), and 434 to 549 (LPEL…TVLS). The segment covering 369–383 (SVPSSPASAQGSPHH) has biased composition (polar residues). The span at 389–400 (PSALSAPASSAS) shows a compositional bias: low complexity. Residue threonine 417 is modified to Phosphothreonine. Residue serine 483 is modified to Phosphoserine. Residues 485-498 (EEERQSLLPDKEGT) are compositionally biased toward basic and acidic residues. Residues 522–534 (RSPKRMGVHHLHR) are compositionally biased toward basic residues. Serine 537 is subject to Phosphoserine. The segment covering 538–549 (LTQAQEQGTVLS) has biased composition (polar residues).

Interacts with DLG1. Interacts with ARF6 (GTP-bound form). In terms of tissue distribution, widely expressed including in adult thymus, heart, lung, liver, small intestine, kidney, spleen, testis and skeletal muscle and in embryonic brain but not detected in adult brain (at protein level).

Its subcellular location is the golgi apparatus. The protein resides in the trans-Golgi network. The protein localises to the cell junction. It is found in the tight junction. It localises to the cell membrane. In terms of biological role, plays a role in regulating the structure of the Golgi apparatus. The protein is Tight junction-associated protein 1 of Mus musculus (Mouse).